The following is a 69-amino-acid chain: Protein SlyX homolog (69 aa).

The protein belongs to the SlyX family.

The protein is Protein SlyX homolog of Maricaulis maris (strain MCS10) (Caulobacter maris).